The chain runs to 142 residues: Chorion class A protein Ld19 (142 aa).

Positions 1-18 (MNSFALLLVCIQACLVQS) are cleaved as a signal peptide.

The protein belongs to the chorion protein family.

Its function is as follows. This protein is one of many from the eggshell of the gypsy moth. The protein is Chorion class A protein Ld19 of Lymantria dispar (Gypsy moth).